The sequence spans 492 residues: Target of Myb1 membrane trafficking protein (492 aa).

At Met-1 the chain carries N-acetylmethionine. Ser-11 carries the post-translational modification Phosphoserine. Residues 20 to 152 (ATDGSLQSED…DLRRKGLEFP (133 aa)) enclose the VHS domain. Positions 48–56 (KDAFRAVKK) match the KRKK motif. The residue at position 160 (Ser-160) is a Phosphoserine. Phosphothreonine is present on Thr-164. The span at 167–195 (RTVFNSETPSRQNSVSSNTSQRGDLSQHA) shows a compositional bias: polar residues. A disordered region spans residues 167–215 (RTVFNSETPSRQNSVSSNTSQRGDLSQHATPLPTPAVLPGDSPITPTPE). Ser-176, Ser-180, and Ser-208 each carry phosphoserine. The GAT domain occupies 215–303 (EQIGKLRSEL…VFLRHERFER (89 aa)). Residues 321-326 (DLIDMG) are clathrin box. Phosphoserine is present on residues Ser-355 and Ser-376. Residue Lys-385 forms a Glycyl lysine isopeptide (Lys-Gly) (interchain with G-Cter in SUMO2) linkage. The interval 392–463 (TDGLAGALDA…ADRLPNLASP (72 aa)) is interaction with MYO6. Residues 450–492 (RAKAADRLPNLASPSAEGPPRPSPGTAPRRKTQEKDDDMLFAL) form a disordered region. At Ser-462 the chain carries Phosphoserine.

The protein belongs to the TOM1 family. In terms of assembly, found in a complex with TOLLIP; interacts (via GAT domain) with TOLLIP (via N-terminus); the interactions leads to TOM1-recruitment to endosomes and inhibition of TOLLIP binding to PtdIns(3)P. Interacts (via GAT domain and the C-terminal part of the VHS domain) with UBC/ubiquitin. Interacts (via clathrin box and C-terminus) with clathrin heavy chain. Interacts with MYO6. Interacts with TAX1BP1; CALCOCO2/NDP52 and OPTN; the interaction is indirect and is mediated by MYO6, which acts as a bridge between TOM1 and the three autophagy receptors. Interacts (via C-terminus) with ZFYVE16 (via C-terminus); interaction is required to target TOM1 and clathrin to endosomes. Interacts with LRBA. Monoubiquitinated. In terms of tissue distribution, ubiquitous. In adult brain, it is highly expressed at the mesencephalic level, in the hippocampal formation and medial lemniscus. In cerebellum, it is highly expressed in Purkinje cells and granular layers.

Its subcellular location is the cytoplasm. The protein resides in the endosome membrane. It localises to the early endosome membrane. Adapter protein that plays a role in the intracellular membrane trafficking of ubiquitinated proteins, thereby participating in autophagy, ubiquitination-dependent signaling and receptor recycling pathways. Acts as a MYO6/Myosin VI adapter protein that targets MYO6 to endocytic structures. Together with MYO6, required for autophagosomal delivery of endocytic cargo, the maturation of autophagosomes and their fusion with lysosomes. MYO6 links TOM1 with autophagy receptors, such as TAX1BP1; CALCOCO2/NDP52 and OPTN. Binds to polyubiquitinated proteins via its GAT domain. In a complex with TOLLIP, recruits ubiquitin-conjugated proteins onto early endosomes. The Tom1-Tollip complex may regulate endosomal trafficking by linking polyubiquitinated proteins to clathrin. Mediates clathrin recruitment to early endosomes by ZFYVE16. Modulates binding of TOLLIP to phosphatidylinositol 3-phosphate (PtdIns(3)P) via binding competition; the association with TOLLIP may favor the release of TOLLIP from endosomal membranes, allowing TOLLIP to commit to cargo trafficking. Acts as a phosphatidylinositol 5-phosphate (PtdIns(5)P) effector by binding to PtdIns(5)P, thereby regulating endosomal maturation. PtdIns(5)P-dependent recruitment to signaling endosomes may block endosomal maturation. Also inhibits Toll-like receptor (TLR) signaling and participates in immune receptor recycling. This is Target of Myb1 membrane trafficking protein from Mus musculus (Mouse).